Reading from the N-terminus, the 564-residue chain is Sphingomyelin phosphodiesterase 1 (564 aa).

Residues 1–17 (MRIIYLISTVLLIYTNA) form the signal peptide. The Saposin B-type domain occupies 37–121 (FQPLCISCTG…IILPDCADPT (85 aa)). Cystine bridges form between Cys41–Cys117, Cys44–Cys110, and Cys72–Cys83. Residue Asn151 is glycosylated (N-linked (GlcNAc...) asparagine). Residues Asp165 and His167 each coordinate Zn(2+). 2 disulfides stabilise this stretch: Cys180–Cys185 and Cys186–Cys206. A glycan (N-linked (GlcNAc...) asparagine) is linked at Asn221. Positions 234 and 274 each coordinate Zn(2+). A disulfide bridge links Cys341 with Cys389. Asn351 is a glycosylation site (N-linked (GlcNAc...) asparagine). Zn(2+) is bound by residues His381, His415, and His417. N-linked (GlcNAc...) asparagine glycosylation occurs at Asn430. 2 cysteine pairs are disulfide-bonded: Cys538–Cys542 and Cys548–Cys561. The N-linked (GlcNAc...) asparagine glycan is linked to Asn556.

It belongs to the acid sphingomyelinase family. It depends on Zn(2+) as a cofactor.

Its subcellular location is the secreted. It carries out the reaction a sphingomyelin + H2O = phosphocholine + an N-acylsphing-4-enine + H(+). The catalysed reaction is an N-acyl-15-methylhexadecasphing-4-enine-1-phosphocholine + H2O = an N-acyl-15-methylhexadecasphing-4-enine + phosphocholine + H(+). It participates in lipid metabolism; sphingolipid metabolism. Functionally, sphingomyelin phosphodiesterase (sphingomyelinase) that converts sphingomyelin to ceramide (N-acyl-sphingoid base) and phosphocholine at acidic pH. Displays its enzymatic activity when secreted. May play distinct roles in signaling. This Caenorhabditis elegans protein is Sphingomyelin phosphodiesterase 1 (asm-1).